Here is a 179-residue protein sequence, read N- to C-terminus: Interferon lambda-4 (179 aa).

Positions 1 to 21 (MRPSVWAAVAAGLWVLCTVIA) are cleaved as a signal peptide. Positions 130–149 (SSRKVPGAQKRRHKPRRADS) are disordered.

The protein belongs to the lambda interferon family.

It is found in the cytoplasm. Its subcellular location is the secreted. Functionally, cytokine that may trigger an antiviral response activating the JAK-STAT pathway and up-regulating specifically some interferon-stimulated genes. The chain is Interferon lambda-4 (IFNL4) from Homo sapiens (Human).